The primary structure comprises 495 residues: Probable biotin-dependent acyl-coenzyme A carboxylase beta3 subunit (495 aa).

Positions 1 to 236 constitute a CoA carboxyltransferase N-terminal domain; it reads MSRITTDQLR…PLPAPQTPAP (236 aa). The CoA carboxyltransferase C-terminal domain occupies 242 to 470; it reads TWDSVVASRR…SNAIAAEVHA (229 aa).

Belongs to the AccD/PCCB family. The biotin-dependent acyl-CoA carboxylase complex is composed of an AccA protein, which contains the biotin carboxylase (BC) and biotin carboxyl carrier protein (BCCP) domains, and an AccD protein, which contains the carboxyl transferase (CT) domain.

Component of a biotin-dependent acyl-CoA carboxylase complex. This subunit transfers the CO2 from carboxybiotin to the CoA ester substrate. The protein is Probable biotin-dependent acyl-coenzyme A carboxylase beta3 subunit (accD3) of Mycobacterium bovis (strain ATCC BAA-935 / AF2122/97).